The chain runs to 194 residues: MGMYKYIREAWKSPKKSYVGQLLKKRMIKWRREPVVVRVERPTRLDRARSLGYQAKQGYVIVRVRVRRGGRKRPRWKGGRKPSKMGMVKYSPKKSLQWIAEEKAARKFPNLEVLNSYWVGEDGMYKWFEVIMVDPHHPVIKSDPKIAWIAGKAHKGRVFRGLTSAGRKSRGLRNKGKGAEKVRPSVRANKGKTK.

The disordered stretch occupies residues 162 to 194; sequence LTSAGRKSRGLRNKGKGAEKVRPSVRANKGKTK. Residues 167–176 are compositionally biased toward basic residues; the sequence is RKSRGLRNKG.

This sequence belongs to the eukaryotic ribosomal protein eL15 family.

This Thermococcus onnurineus (strain NA1) protein is Large ribosomal subunit protein eL15.